Reading from the N-terminus, the 263-residue chain is 3-deoxy-manno-octulosonate cytidylyltransferase (263 aa).

It belongs to the KdsB family.

The protein resides in the cytoplasm. It carries out the reaction 3-deoxy-alpha-D-manno-oct-2-ulosonate + CTP = CMP-3-deoxy-beta-D-manno-octulosonate + diphosphate. It participates in nucleotide-sugar biosynthesis; CMP-3-deoxy-D-manno-octulosonate biosynthesis; CMP-3-deoxy-D-manno-octulosonate from 3-deoxy-D-manno-octulosonate and CTP: step 1/1. Its pathway is bacterial outer membrane biogenesis; lipopolysaccharide biosynthesis. Activates KDO (a required 8-carbon sugar) for incorporation into bacterial lipopolysaccharide in Gram-negative bacteria. The protein is 3-deoxy-manno-octulosonate cytidylyltransferase of Burkholderia vietnamiensis (strain G4 / LMG 22486) (Burkholderia cepacia (strain R1808)).